The primary structure comprises 519 residues: Galactokinase (519 aa).

Alpha-D-galactose is bound by residues arginine 47, glutamate 53, histidine 54, and aspartate 56. Glycine 159, glycine 161, serine 163, and serine 164 together coordinate ATP. Aspartate 209 provides a ligand contact to alpha-D-galactose. Aspartate 209 serves as the catalytic Proton acceptor. Asparagine 257 and lysine 258 together coordinate ATP. Tyrosine 266 is a binding site for alpha-D-galactose.

The protein belongs to the GHMP kinase family. GalK subfamily.

The catalysed reaction is alpha-D-galactose + ATP = alpha-D-galactose 1-phosphate + ADP + H(+). It functions in the pathway carbohydrate metabolism; galactose metabolism. Galactokinase is a key enzyme in the galactose metabolism where it catalyzes the conversion of alpha-D-galactose to galactose 1-phosphate. Can also induce the transcription of the gal genes in response to the organism being challenged with galactose as the sole source of carbon. This Schizosaccharomyces pombe (strain 972 / ATCC 24843) (Fission yeast) protein is Galactokinase (gal1).